The chain runs to 461 residues: Mitochondrial distribution and morphology protein 12 (461 aa).

The SMP-LTD domain maps to 1–454 (MSLDLDWNLL…YPNYYTIDLP (454 aa)). 2 disordered regions span residues 75–104 (RRRG…VHHG) and 226–301 (DASS…PSSA). 2 stretches are compositionally biased toward polar residues: residues 80 to 97 (RQTT…SPTD) and 272 to 288 (RATS…QNSP).

The protein belongs to the MDM12 family. As to quaternary structure, component of the ER-mitochondria encounter structure (ERMES) or MDM complex, composed of MMM1, MDM10, MDM12 and MDM34. An MMM1 homodimer associates with one molecule of MDM12 on each side in a pairwise head-to-tail manner, and the SMP-LTD domains of MMM1 and MDM12 generate a continuous hydrophobic tunnel for phospholipid trafficking.

Its subcellular location is the mitochondrion outer membrane. It is found in the endoplasmic reticulum membrane. In terms of biological role, component of the ERMES/MDM complex, which serves as a molecular tether to connect the endoplasmic reticulum (ER) and mitochondria. Components of this complex are involved in the control of mitochondrial shape and protein biogenesis, and function in nonvesicular lipid trafficking between the ER and mitochondria. MDM12 is required for the interaction of the ER-resident membrane protein MMM1 and the outer mitochondrial membrane-resident beta-barrel protein MDM10. The MDM12-MMM1 subcomplex functions in the major beta-barrel assembly pathway that is responsible for biogenesis of all mitochondrial outer membrane beta-barrel proteins, and acts in a late step after the SAM complex. The MDM10-MDM12-MMM1 subcomplex further acts in the TOM40-specific pathway after the action of the MDM12-MMM1 complex. Essential for establishing and maintaining the structure of mitochondria and maintenance of mtDNA nucleoids. This is Mitochondrial distribution and morphology protein 12 from Mycosarcoma maydis (Corn smut fungus).